The following is a 182-amino-acid chain: CDP-diacylglycerol--glycerol-3-phosphate 3-phosphatidyltransferase (182 aa).

At 1–12 (MRLNIPTCLTLF) the chain is on the cytoplasmic side. The chain crosses the membrane as a helical span at residues 13–37 (RLIIVPFFIIVFYLPFSNASFYSAI). Residues 38 to 60 (IFILAALTDWFDGFLARKLNQTT) lie on the Periplasmic side of the membrane. Residues 61-81 (CFGAFLDPVADKIIVVIGLIL) form a helical membrane-spanning segment. The Cytoplasmic portion of the chain corresponds to 82 to 86 (IIEYF). The helical transmembrane segment at 87 to 107 (HSFWITIPSLIMIIREIIISS) threads the bilayer. Residues 108 to 145 (LREWMAEIGKNNLLSVSLISKLKTSIQMLAIFSLLWKE) lie on the Periplasmic side of the membrane. Residues 146–168 (TYIIIIIGILSLYVSSILAFLSM) form a helical membrane-spanning segment. Residues 169–181 (LKYFYIAWRDLFR) are Cytoplasmic-facing.

This sequence belongs to the CDP-alcohol phosphatidyltransferase class-I family.

The protein resides in the cell inner membrane. It catalyses the reaction a CDP-1,2-diacyl-sn-glycerol + sn-glycerol 3-phosphate = a 1,2-diacyl-sn-glycero-3-phospho-(1'-sn-glycero-3'-phosphate) + CMP + H(+). It functions in the pathway phospholipid metabolism; phosphatidylglycerol biosynthesis; phosphatidylglycerol from CDP-diacylglycerol: step 1/2. In terms of biological role, catalyzes the conversion of cytidine diphosphate diacylglycerol (CDP-DG) and glycerol 3-phosphate into phosphatidylglycerol. Essential for the synthesis of anionic phospholipids, thereby playing a role in balancing the ratio of zwitterionic and anionic phospholipids, which is thought to be important for normal membrane function. This chain is CDP-diacylglycerol--glycerol-3-phosphate 3-phosphatidyltransferase, found in Wigglesworthia glossinidia brevipalpis.